A 1818-amino-acid polypeptide reads, in one-letter code: Unconventional myosin-Vb (1818 aa).

A Myosin N-terminal SH3-like domain is found at 8–60; it reads TRYTRVWIPDPDEVWRSAELTKDYKEGDKSLQLRLEDDTILEYPVDVQNNQVP. Residues 21–40 form a requires for interaction with LIMA1 region; that stretch reads VWRSAELTKDYKEGDKSLQL. Residues 69 to 762 form the Myosin motor domain; the sequence is VGENDLTALS…QVAYLEKLRA (694 aa). Residue 163 to 170 participates in ATP binding; it reads GESGAGKT. Positions 641-663 are actin-binding; that stretch reads LNLLMETLNATTPHYVRCIKPND. 6 IQ domains span residues 765-794, 788-817, 813-842, 836-865, 861-890, and 884-913; these read FREA…ATLS, LRAA…TRAA, RTRA…ATVI, VCRA…EHKA, MEHK…AAIV, and ERDA…EARS. Disordered regions lie at residues 1086-1120 and 1161-1188; these read LRDE…EIGD and QAQL…VDQD. A compositionally biased stretch (polar residues) spans 1098–1118; it reads PSNQSSLESDSNYPSISTSEI. 2 coiled-coil regions span residues 1140–1261 and 1313–1415; these read MTVF…LILR and LEAQ…ALAQ. Phosphoserine is present on serine 1416. The Dilute domain occupies 1496 to 1773; that stretch reads SSTINGIKKV…IRTIQAQLQE (278 aa).

The protein belongs to the TRAFAC class myosin-kinesin ATPase superfamily. Myosin family. In terms of assembly, component of the CART complex, at least composed of ACTN4, HGS/HRS, MYO5B and TRIM3. Interacts with RAB11FIP2. Interacts with RAB11A and RAB8A. Found in a complex with CFTR and RAB11A. Interacts with NPC1L1. Interacts with LIMA1.

It localises to the cytoplasm. In terms of biological role, may be involved in vesicular trafficking via its association with the CART complex. The CART complex is necessary for efficient transferrin receptor recycling but not for EGFR degradation. Required in a complex with RAB11A and RAB11FIP2 for the transport of NPC1L1 to the plasma membrane. Together with RAB11A participates in CFTR trafficking to the plasma membrane and TF (transferrin) recycling in nonpolarized cells. Together with RAB11A and RAB8A participates in epithelial cell polarization. Together with RAB25 regulates transcytosis. Required for proper localization of bile salt export pump ABCB11 at the apical/canalicular plasma membrane of hepatocytes. This is Unconventional myosin-Vb (Myo5b) from Mus musculus (Mouse).